A 114-amino-acid chain; its full sequence is Hemerythrin (114 aa).

Fe cation contacts are provided by His-26, His-55, Glu-59, His-74, His-78, His-102, and Asp-107.

The protein belongs to the hemerythrin family. Homooctamer.

Hemerythrin is a respiratory protein in blood cells of certain marine worms. The oxygen-binding site in each chain contains two iron atoms. The chain is Hemerythrin from Phascolopsis gouldii (Peanut worm).